The chain runs to 371 residues: uncharacterized protein (371 aa).

To E.coli YcjY.

This is an uncharacterized protein from Pseudomonas aeruginosa (strain ATCC 15692 / DSM 22644 / CIP 104116 / JCM 14847 / LMG 12228 / 1C / PRS 101 / PAO1).